The primary structure comprises 197 residues: Holliday junction branch migration complex subunit RuvA (197 aa).

Residues 1–62 (MIEFVRGEVA…EDQEVLFGFR (62 aa)) form a domain I region. The interval 63-141 (SRRERALFTK…ELAPDYIPSE (79 aa)) is domain II. The tract at residues 141–145 (EGLFA) is flexible linker. Residues 146 to 197 (QGNAELNEACEALTALGYSEREVEKVKKALQGEVLSTDQYVKRALQLLLNVR) form a domain III region.

It belongs to the RuvA family. In terms of assembly, homotetramer. Forms an RuvA(8)-RuvB(12)-Holliday junction (HJ) complex. HJ DNA is sandwiched between 2 RuvA tetramers; dsDNA enters through RuvA and exits via RuvB. An RuvB hexamer assembles on each DNA strand where it exits the tetramer. Each RuvB hexamer is contacted by two RuvA subunits (via domain III) on 2 adjacent RuvB subunits; this complex drives branch migration. In the full resolvosome a probable DNA-RuvA(4)-RuvB(12)-RuvC(2) complex forms which resolves the HJ.

Its subcellular location is the cytoplasm. In terms of biological role, the RuvA-RuvB-RuvC complex processes Holliday junction (HJ) DNA during genetic recombination and DNA repair, while the RuvA-RuvB complex plays an important role in the rescue of blocked DNA replication forks via replication fork reversal (RFR). RuvA specifically binds to HJ cruciform DNA, conferring on it an open structure. The RuvB hexamer acts as an ATP-dependent pump, pulling dsDNA into and through the RuvAB complex. HJ branch migration allows RuvC to scan DNA until it finds its consensus sequence, where it cleaves and resolves the cruciform DNA. In Exiguobacterium sibiricum (strain DSM 17290 / CCUG 55495 / CIP 109462 / JCM 13490 / 255-15), this protein is Holliday junction branch migration complex subunit RuvA.